The chain runs to 365 residues: Geissoschizine synthase (365 aa).

Residue Cys-51 participates in Zn(2+) binding. Asn-52 provides a ligand contact to NADP(+). Residues His-73, Glu-74, Cys-104, Cys-107, Cys-110, Cys-118, and Cys-169 each contribute to the Zn(2+) site. NADP(+) contacts are provided by Leu-195, Gly-197, Leu-198, Ser-217, Thr-218, Ser-219, Lys-222, Arg-262, Val-281, Ala-283, Ser-305, Thr-307, and Arg-352.

Belongs to the zinc-containing alcohol dehydrogenase family. Class-III subfamily. In terms of assembly, homodimer. Zn(2+) serves as cofactor. As to expression, mainly expressed in roots and, to a lower level, in leaves.

The enzyme catalyses (19E)-geissoschizine + NADP(+) = 4,21-dehydrogeissoschizine + NADPH. It functions in the pathway alkaloid biosynthesis; ajmaline biosynthesis. In terms of biological role, alcohol dehydrogenase involved in the biosynthesis of ajmaline-type monoterpenoid indole alkaloids (MIAs) natural products, important plant-derived pharmaceuticals used in the therapy of heart disorders. Catalyzes iminium reduction on 4,21-dehydrogeissoschizine to produce 19E-geissoschizine, precursor of vomilenine, an intermediate chemical in the biosynthesis of ajmaline. This chain is Geissoschizine synthase, found in Rauvolfia serpentina (Serpentine wood).